The chain runs to 235 residues: Ribosomal RNA small subunit methyltransferase G (235 aa).

S-adenosyl-L-methionine-binding positions include G98, M103, 149 to 150, and R164; that span reads VE.

It belongs to the methyltransferase superfamily. RNA methyltransferase RsmG family.

It localises to the cytoplasm. The catalysed reaction is guanosine(527) in 16S rRNA + S-adenosyl-L-methionine = N(7)-methylguanosine(527) in 16S rRNA + S-adenosyl-L-homocysteine. In terms of biological role, specifically methylates the N7 position of guanine in position 527 of 16S rRNA. The chain is Ribosomal RNA small subunit methyltransferase G from Cupriavidus pinatubonensis (strain JMP 134 / LMG 1197) (Cupriavidus necator (strain JMP 134)).